A 441-amino-acid polypeptide reads, in one-letter code: Amino-acid acetyltransferase (441 aa).

In terms of domain architecture, N-acetyltransferase spans 295–434; that stretch reads EQVRRATIND…QALYNYQRRS (140 aa).

The protein belongs to the acetyltransferase family. ArgA subfamily. Homohexamer.

It localises to the cytoplasm. It carries out the reaction L-glutamate + acetyl-CoA = N-acetyl-L-glutamate + CoA + H(+). It participates in amino-acid biosynthesis; L-arginine biosynthesis; N(2)-acetyl-L-ornithine from L-glutamate: step 1/4. The sequence is that of Amino-acid acetyltransferase from Serratia proteamaculans (strain 568).